A 110-amino-acid chain; its full sequence is Phosphoribosyl-ATP pyrophosphatase (110 aa).

The protein belongs to the PRA-PH family.

Its subcellular location is the cytoplasm. The enzyme catalyses 1-(5-phospho-beta-D-ribosyl)-ATP + H2O = 1-(5-phospho-beta-D-ribosyl)-5'-AMP + diphosphate + H(+). Its pathway is amino-acid biosynthesis; L-histidine biosynthesis; L-histidine from 5-phospho-alpha-D-ribose 1-diphosphate: step 2/9. The sequence is that of Phosphoribosyl-ATP pyrophosphatase from Teredinibacter turnerae (strain ATCC 39867 / T7901).